Consider the following 206-residue polypeptide: LexA repressor (206 aa).

A DNA-binding region (H-T-H motif) is located at residues valine 28 to serine 48. Residues serine 128 and lysine 166 each act as for autocatalytic cleavage activity in the active site.

The protein belongs to the peptidase S24 family. As to quaternary structure, homodimer.

It carries out the reaction Hydrolysis of Ala-|-Gly bond in repressor LexA.. Represses a number of genes involved in the response to DNA damage (SOS response), including recA and lexA. In the presence of single-stranded DNA, RecA interacts with LexA causing an autocatalytic cleavage which disrupts the DNA-binding part of LexA, leading to derepression of the SOS regulon and eventually DNA repair. In Bacillus cytotoxicus (strain DSM 22905 / CIP 110041 / 391-98 / NVH 391-98), this protein is LexA repressor.